The primary structure comprises 89 residues: Small ribosomal subunit protein uS15 (89 aa).

The protein belongs to the universal ribosomal protein uS15 family. In terms of assembly, part of the 30S ribosomal subunit. Forms a bridge to the 50S subunit in the 70S ribosome, contacting the 23S rRNA.

Its function is as follows. One of the primary rRNA binding proteins, it binds directly to 16S rRNA where it helps nucleate assembly of the platform of the 30S subunit by binding and bridging several RNA helices of the 16S rRNA. Functionally, forms an intersubunit bridge (bridge B4) with the 23S rRNA of the 50S subunit in the ribosome. This is Small ribosomal subunit protein uS15 from Caulobacter vibrioides (strain NA1000 / CB15N) (Caulobacter crescentus).